Consider the following 299-residue polypeptide: 5-azacytidine resistance protein azr1 (299 aa).

The region spanning 35-293 (KSHFPSPATL…DDTTITCLLI (259 aa)) is the PPM-type phosphatase domain.

Functionally, confers azacytidine resistance in high copy. This is 5-azacytidine resistance protein azr1 (azr1) from Schizosaccharomyces pombe (strain 972 / ATCC 24843) (Fission yeast).